The sequence spans 499 residues: 6-hydroxynicotinate reductase (499 aa).

4Fe-4S ferredoxin-type domains follow at residues 1–29 and 31–61; these read MFKI…YEKK and KGAI…NDAP. [4Fe-4S] cluster-binding residues include cysteine 9, cysteine 12, cysteine 15, cysteine 19, cysteine 41, cysteine 44, cysteine 47, and cysteine 51.

As to quaternary structure, homotetramer. An oxidized flavin serves as cofactor. It depends on [2Fe-2S] cluster as a cofactor. [4Fe-4S] cluster is required as a cofactor.

It catalyses the reaction 1,4,5,6-tetrahydro-6-oxonicotinate + oxidized 2[4Fe-4S]-[ferredoxin] = 6-hydroxynicotinate + reduced 2[4Fe-4S]-[ferredoxin] + 2 H(+). Its pathway is cofactor degradation; nicotinate degradation; propanoate and pyruvate from 6-hydroxynicotinate: step 1/8. Its function is as follows. Catalyzes the reversible reduction of 6-hydroxynicotinate to 6-oxo-1,4,5,6-tetrahydronicotinate. The polypeptide is 6-hydroxynicotinate reductase (Eubacterium barkeri (Clostridium barkeri)).